The sequence spans 426 residues: MKFTELKIIEQGQGKWTVTIDGTEWTETLKKAKNRVLANLEVPGFRKGKIPAAQAEKYVTPSKIYNEAYRMMVSPAFDFARAQEVKVEPMNSPEPIPAKVSEKELVIEFLFDLKPEIKLGDYKNIKTVKKETVEVTKEEIEAVIDQYCEQFIMEKPKAADAKIEKGDIVTFDFKGFMNGEAFKGGEAKGHKLVIGSNQFIPGFEDSMIGLGLGEAKIDVTFPEGYTPELANKPATFELNIIEVKARELPKKDDELVKDLNLPNVETFAQFEAKVKEDITKQKLQNVKNQFVNDLINEIIKNSTIELPKTAIENQTADLRKEFEAQLKQQGLDIKKYKKVTGLSDEAIKAELTADAKNKLETYLVTSEIRSKEKFEVTEEAINAKFENLAAQFGIPADQIKTMVNPEMLKSEIVNDLLVDFLYSNNG.

Residues 166-249 (GDIVTFDFKG…IIEVKARELP (84 aa)) enclose the PPIase FKBP-type domain.

It belongs to the FKBP-type PPIase family. Tig subfamily.

It is found in the cytoplasm. It carries out the reaction [protein]-peptidylproline (omega=180) = [protein]-peptidylproline (omega=0). Involved in protein export. Acts as a chaperone by maintaining the newly synthesized protein in an open conformation. Functions as a peptidyl-prolyl cis-trans isomerase. The polypeptide is Trigger factor (Mesoplasma florum (strain ATCC 33453 / NBRC 100688 / NCTC 11704 / L1) (Acholeplasma florum)).